Reading from the N-terminus, the 304-residue chain is Undecaprenyl-diphosphatase (304 aa).

Helical transmembrane passes span 1 to 21, 54 to 74, 90 to 110, 114 to 134, 192 to 212, 225 to 245, and 253 to 273; these read MSLL…FLPV, TTLA…AAGL, LAWF…LFEE, ALGN…LLAA, FLLS…KTVP, LVGT…LLGW, and LFVV…WQGV.

It belongs to the UppP family.

The protein localises to the cell inner membrane. It carries out the reaction di-trans,octa-cis-undecaprenyl diphosphate + H2O = di-trans,octa-cis-undecaprenyl phosphate + phosphate + H(+). Its function is as follows. Catalyzes the dephosphorylation of undecaprenyl diphosphate (UPP). Confers resistance to bacitracin. The protein is Undecaprenyl-diphosphatase of Anaeromyxobacter sp. (strain Fw109-5).